A 374-amino-acid polypeptide reads, in one-letter code: Eukaryotic translation initiation factor 3 subunit M (374 aa).

One can recognise a PCI domain in the interval 180–339 (EAAKVMVELL…KKVVVSHSTH (160 aa)).

It belongs to the eIF-3 subunit M family. As to quaternary structure, component of the eukaryotic translation initiation factor 3 (eIF-3) complex, which is composed of 13 subunits: eif3a, eif3b, eif3c, eif3d, eif3e, eif3f, eif3g, eif3h, eif3i, eif3j, eif3k, eif3l and eif3m.

It localises to the cytoplasm. In terms of biological role, component of the eukaryotic translation initiation factor 3 (eIF-3) complex, which is involved in protein synthesis of a specialized repertoire of mRNAs and, together with other initiation factors, stimulates binding of mRNA and methionyl-tRNAi to the 40S ribosome. The eIF-3 complex specifically targets and initiates translation of a subset of mRNAs involved in cell proliferation. This Xenopus laevis (African clawed frog) protein is Eukaryotic translation initiation factor 3 subunit M (eif3m).